A 201-amino-acid polypeptide reads, in one-letter code: MEKTLIIATRNSGKTKEFKKLFADFGYEIKDLTDYPELSEIEETGTTFEENARLKAEQIAEITGQVVIGDDSGLCVDVLGGLPGIWSHRFSAPDPTDEKNIAKLLHELAPTAITPERRSAHFHTTLVAAKPGRESLVVEADWDGYIALAPKGENGFGYDPIFMVDAFRTAAELSEKEKNQVSHRGQALRKLMAELPEWLYK.

9–14 (TRNSGK) provides a ligand contact to substrate. Residues Glu-42 and Asp-71 each coordinate Mg(2+). Asp-71 serves as the catalytic Proton acceptor. Substrate contacts are provided by residues Ser-72, 156–159 (FGYD), Lys-178, and 183–184 (HR).

It belongs to the HAM1 NTPase family. Homodimer. Requires Mg(2+) as cofactor.

It catalyses the reaction XTP + H2O = XMP + diphosphate + H(+). The catalysed reaction is dITP + H2O = dIMP + diphosphate + H(+). It carries out the reaction ITP + H2O = IMP + diphosphate + H(+). Pyrophosphatase that catalyzes the hydrolysis of nucleoside triphosphates to their monophosphate derivatives, with a high preference for the non-canonical purine nucleotides XTP (xanthosine triphosphate), dITP (deoxyinosine triphosphate) and ITP. Seems to function as a house-cleaning enzyme that removes non-canonical purine nucleotides from the nucleotide pool, thus preventing their incorporation into DNA/RNA and avoiding chromosomal lesions. This Lactococcus lactis subsp. lactis (strain IL1403) (Streptococcus lactis) protein is dITP/XTP pyrophosphatase (ynbD).